The primary structure comprises 571 residues: Hemagglutinin-neuraminidase (571 aa).

The Intravirion segment spans residues 1-25; the sequence is MEDYSNLSLKSIPKRTCRIIFRTAT. The helical transmembrane segment at 26–46 threads the bilayer; that stretch reads ILGICTLIVLCSSILHEIIHL. The Virion surface portion of the chain corresponds to 47–571; it reads DVSSGLMDSD…IIPFLRELIP (525 aa). Intrachain disulfides connect C166/C190, C180/C241, and C232/C245. Residues 228-233 form an important for neuraminidase activity region; it reads NRKSCS. The involved in neuraminidase activity stretch occupies residues 228-233; the sequence is NRKSCS. N-linked (GlcNAc...) asparagine; by host glycosylation is found at N272, N284, N335, and N341. Disulfide bonds link C338-C459, C370-C380, and C453-C463. The N-linked (GlcNAc...) asparagine; by host glycan is linked to N386. Residues 393-398 form a sialic receptor-binding site region; sequence GAEGRL. 5 N-linked (GlcNAc...) asparagine; by host glycosylation sites follow: N454, N498, N501, N517, and N522. Residues C535 and C546 are joined by a disulfide bond.

The protein belongs to the paramyxoviruses hemagglutinin-neuraminidase family. Homotetramer; composed of disulfide-linked homodimers. Interacts with F protein trimer.

The protein resides in the virion membrane. It is found in the host cell membrane. The enzyme catalyses Hydrolysis of alpha-(2-&gt;3)-, alpha-(2-&gt;6)-, alpha-(2-&gt;8)- glycosidic linkages of terminal sialic acid residues in oligosaccharides, glycoproteins, glycolipids, colominic acid and synthetic substrates.. Functionally, attaches the virus to sialic acid-containing cell receptors and thereby initiating infection. Binding of HN protein to the receptor induces a conformational change that allows the F protein to trigger virion/cell membranes fusion. Its function is as follows. Neuraminidase activity ensures the efficient spread of the virus by dissociating the mature virions from the neuraminic acid containing glycoproteins. The protein is Hemagglutinin-neuraminidase (HN) of Human parainfluenza 2 virus (strain Toshiba) (HPIV-2).